A 433-amino-acid polypeptide reads, in one-letter code: Glutamyl-tRNA reductase (433 aa).

Substrate is bound by residues 49-52 (TCNR), S109, 114-116 (EGQ), and Q120. The Nucleophile role is filled by C50. 189–194 (GAGKMS) contacts NADP(+).

Belongs to the glutamyl-tRNA reductase family. In terms of assembly, homodimer.

The catalysed reaction is (S)-4-amino-5-oxopentanoate + tRNA(Glu) + NADP(+) = L-glutamyl-tRNA(Glu) + NADPH + H(+). Its pathway is porphyrin-containing compound metabolism; protoporphyrin-IX biosynthesis; 5-aminolevulinate from L-glutamyl-tRNA(Glu): step 1/2. It participates in porphyrin-containing compound metabolism; chlorophyll biosynthesis. Catalyzes the NADPH-dependent reduction of glutamyl-tRNA(Glu) to glutamate 1-semialdehyde (GSA). The polypeptide is Glutamyl-tRNA reductase (Acaryochloris marina (strain MBIC 11017)).